The following is a 391-amino-acid chain: Cyclin-A1 (391 aa).

This sequence belongs to the cyclin family. Cyclin AB subfamily. Interacts with the CDK1 and the CDK2 protein kinases to form a serine/threonine kinase holoenzyme complex. The cyclin subunit imparts substrate specificity to the complex.

The protein resides in the nucleus. Functionally, may be involved in the control of the cell cycle at the G1/S (start) and G2/M (mitosis) transitions. The sequence is that of Cyclin-A1 (ccna1) from Carassius auratus (Goldfish).